The chain runs to 104 residues: Large ribosomal subunit protein uL24 (104 aa).

This sequence belongs to the universal ribosomal protein uL24 family. In terms of assembly, part of the 50S ribosomal subunit.

In terms of biological role, one of two assembly initiator proteins, it binds directly to the 5'-end of the 23S rRNA, where it nucleates assembly of the 50S subunit. One of the proteins that surrounds the polypeptide exit tunnel on the outside of the subunit. The chain is Large ribosomal subunit protein uL24 from Bartonella tribocorum (strain CIP 105476 / IBS 506).